The following is a 178-amino-acid chain: MAKRKKKEVFDWEDEDQEEIIWVSKSEIKRDAEDLKQLGEKIVNLTKANLAKIPLDESLLDAIELAQRLQKEARRRQLQYIGKLFRGIDVEPIREALDKIENKHNQQQAMLHKIEKVRDELVEKGDVALTDLLNDYPNGDRQQLRNLIRSAQKELEQNKPSKAYREIYQMLKVLMLED.

The protein belongs to the DarP family.

Its subcellular location is the cytoplasm. Functionally, member of a network of 50S ribosomal subunit biogenesis factors which assembles along the 30S-50S interface, preventing incorrect 23S rRNA structures from forming. Promotes peptidyl transferase center (PTC) maturation. This is Dual-action ribosomal maturation protein DarP from Haemophilus influenzae (strain PittEE).